Reading from the N-terminus, the 195-residue chain is MLSLHQLQFNIEQRNLFNLNITFLPSSITYIKGANGSGKSSLLRMISGIMQPNSGNIYYKNNNINNIPKPYCTYIGHNLGLKLEMTVLENLKFWSEIYNSSETLYAAIHYFKLQDLLDEKCYSLSSGMQKVVAAARLIACQSDLWLLDEVETNLSKENRDLLNNLIVMKANSGGIVLLSSHLESSIKSAQILQLV.

In terms of domain architecture, ABC transporter spans 1–195; sequence MLSLHQLQFN…IKSAQILQLV (195 aa). Residue 33–40 participates in ATP binding; the sequence is GANGSGKS.

Belongs to the ABC transporter superfamily. CcmA exporter (TC 3.A.1.107) family. The complex is composed of two ATP-binding proteins (CcmA) and two transmembrane proteins (CcmB).

The protein resides in the cell inner membrane. The enzyme catalyses heme b(in) + ATP + H2O = heme b(out) + ADP + phosphate + H(+). Part of the ABC transporter complex CcmAB involved in the biogenesis of c-type cytochromes; once thought to export heme, this seems not to be the case, but its exact role is uncertain. Responsible for energy coupling to the transport system. This is Cytochrome c biogenesis ATP-binding export protein CcmA from Rickettsia felis (strain ATCC VR-1525 / URRWXCal2) (Rickettsia azadi).